The sequence spans 214 residues: Transmembrane emp24 domain-containing protein p24beta3 (214 aa).

The signal sequence occupies residues 1-27 (MERRQAKIHVFVLIGLILLNSINQISS). The Lumenal portion of the chain corresponds to 28–178 (LSVTVNDEEC…RHTNESTRKR (151 aa)). Residues 35–122 (EECVQEYVLY…PETVSFYIHV (88 aa)) enclose the GOLD domain. A coiled-coil region spans residues 140–158 (VNVKIAELREALESVVAEQ). An omega-N-methylated arginine mark is found at arginine 164 and arginine 169. N-linked (GlcNAc...) asparagine glycosylation is present at asparagine 172. The chain crosses the membrane as a helical span at residues 179-199 (VIFYTVGEYIFLAAASGLQVL). Residues 200 to 214 (YIRKLFSKSVAYNRV) lie on the Cytoplasmic side of the membrane. Positions 204-205 (LF) match the COPII vesicle coat-binding motif. A COPI vesicle coat-binding motif is present at residues 204–214 (LFSKSVAYNRV). A Required for the export from the endoplasmic reticulum to the Golgi motif is present at residues 213-214 (RV).

It belongs to the EMP24/GP25L family. As to quaternary structure, probably oligomerizes with other members of the EMP24/GP25L family. Associates with the COPI vesicle coat (coatomer). Associates with the COPII vesicle coat (coatomer).

It localises to the golgi apparatus. The protein resides in the cis-Golgi network membrane. Its subcellular location is the golgi stack membrane. Involved in vesicular protein trafficking. Mainly functions in the early secretory pathway but also in post-Golgi membranes. Thought to act as cargo receptor at the lumenal side for incorporation of secretory cargo molecules into transport vesicles and to be involved in vesicle coat formation at the cytoplasmic side. The polypeptide is Transmembrane emp24 domain-containing protein p24beta3 (Arabidopsis thaliana (Mouse-ear cress)).